Consider the following 508-residue polypeptide: Aspartyl/glutamyl-tRNA(Asn/Gln) amidotransferase subunit B (508 aa).

Belongs to the GatB/GatE family. GatB subfamily. As to quaternary structure, heterotrimer of A, B and C subunits.

The enzyme catalyses L-glutamyl-tRNA(Gln) + L-glutamine + ATP + H2O = L-glutaminyl-tRNA(Gln) + L-glutamate + ADP + phosphate + H(+). It carries out the reaction L-aspartyl-tRNA(Asn) + L-glutamine + ATP + H2O = L-asparaginyl-tRNA(Asn) + L-glutamate + ADP + phosphate + 2 H(+). In terms of biological role, allows the formation of correctly charged Asn-tRNA(Asn) or Gln-tRNA(Gln) through the transamidation of misacylated Asp-tRNA(Asn) or Glu-tRNA(Gln) in organisms which lack either or both of asparaginyl-tRNA or glutaminyl-tRNA synthetases. The reaction takes place in the presence of glutamine and ATP through an activated phospho-Asp-tRNA(Asn) or phospho-Glu-tRNA(Gln). The protein is Aspartyl/glutamyl-tRNA(Asn/Gln) amidotransferase subunit B of Salinibacter ruber (strain DSM 13855 / M31).